Consider the following 375-residue polypeptide: Glutamate 5-kinase (375 aa).

K17 provides a ligand contact to ATP. Substrate-binding residues include S57, D144, and N156. 176–177 (TD) serves as a coordination point for ATP. The 79-residue stretch at 283–361 (KGRLWLDTGA…HQIEQILGYV (79 aa)) folds into the PUA domain.

The protein belongs to the glutamate 5-kinase family.

The protein resides in the cytoplasm. The catalysed reaction is L-glutamate + ATP = L-glutamyl 5-phosphate + ADP. It participates in amino-acid biosynthesis; L-proline biosynthesis; L-glutamate 5-semialdehyde from L-glutamate: step 1/2. Catalyzes the transfer of a phosphate group to glutamate to form L-glutamate 5-phosphate. In Nitrosococcus oceani (strain ATCC 19707 / BCRC 17464 / JCM 30415 / NCIMB 11848 / C-107), this protein is Glutamate 5-kinase.